The chain runs to 662 residues: Methyl-accepting chemotaxis protein TlpB (662 aa).

Residues 1–16 (MGKFIQWIKQPSISKP) lie on the Cytoplasmic side of the membrane. The helical transmembrane segment at 17-37 (LIAAFLAVLILPVGVLAYFSY) threads the bilayer. Topologically, residues 38 to 281 (QSAWNALDRE…LQDASSPVLN (244 aa)) are extracellular. Positions 153–228 (SEPYTDEATG…KPGTTGSGDW (76 aa)) constitute a Cache domain. The helical transmembrane segment at 282-302 (TAVIILCVSIVIGGILILYII) threads the bilayer. The 53-residue stretch at 303 to 355 (RAITKPLRKLVSTSAKISSGDLTEVIDIHSKNEFGQLGESFNEMSASLRSVIG) folds into the HAMP domain. The Cytoplasmic portion of the chain corresponds to 303 to 662 (RAITKPLRKL…DITKKFKIES (360 aa)). Position 370 is a glutamate methyl ester (Glu) (glutamate 370). The Methyl-accepting transducer domain occupies 374–610 (SAAQTSKATE…EVSSAVEDIS (237 aa)). The residue at position 594 (glutamine 594) is a Glutamate methyl ester (Gln). Glutamate 629 and glutamate 636 each carry glutamate methyl ester (Glu).

This sequence belongs to the methyl-accepting chemotaxis (MCP) protein family.

The protein resides in the cell membrane. In terms of biological role, chemotactic-signal transducers respond to changes in the concentration of attractants and repellents in the environment, transduce a signal from the outside to the inside of the cell, and facilitate sensory adaptation through the variation of the level of methylation. All amino acids serve as attractants in B.subtilis, they appear to cause an increase in the turnover methyl groups, leading to methylation of an unidentified acceptor, while repellents have been shown to cause a decrease in methyl group turnover. The methyl groups are added by a methyltransferase and removed by a methylesterase. The sequence is that of Methyl-accepting chemotaxis protein TlpB (tlpB) from Bacillus subtilis (strain 168).